The following is a 178-amino-acid chain: Interleukin-10 (178 aa).

Residues 1–18 form the signal peptide; the sequence is MHSSALLCCLVFLTGVRA. 2 disulfides stabilise this stretch: cysteine 30/cysteine 126 and cysteine 80/cysteine 132. Asparagine 134 is a glycosylation site (N-linked (GlcNAc...) asparagine).

The protein belongs to the IL-10 family. As to quaternary structure, homodimer. Interacts with IL10RA and IL10RB.

It is found in the secreted. Major immune regulatory cytokine that acts on many cells of the immune system where it has profound anti-inflammatory functions, limiting excessive tissue disruption caused by inflammation. Mechanistically, IL10 binds to its heterotetrameric receptor comprising IL10RA and IL10RB leading to JAK1 and STAT2-mediated phosphorylation of STAT3. In turn, STAT3 translocates to the nucleus where it drives expression of anti-inflammatory mediators. Targets antigen-presenting cells (APCs) such as macrophages and monocytes and inhibits their release of pro-inflammatory cytokines including granulocyte-macrophage colony-stimulating factor /GM-CSF, granulocyte colony-stimulating factor/G-CSF, IL-1 alpha, IL-1 beta, IL-6, IL-8 and TNF-alpha. Also interferes with antigen presentation by reducing the expression of MHC-class II and co-stimulatory molecules, thereby inhibiting their ability to induce T cell activation. In addition, controls the inflammatory response of macrophages by reprogramming essential metabolic pathways including mTOR signaling. The chain is Interleukin-10 (IL10) from Callithrix jacchus (White-tufted-ear marmoset).